The sequence spans 1058 residues: Kinesin-like protein KIN-7M, chloroplastic (1058 aa).

The N-terminal 60 residues, 1–60 (MASSSSRTRSRSPFSHRRPPSPYSSASSTSSSLINNRLLPRSSSTPTSTVYNSGGVTGSR), are a transit peptide targeting the chloroplast. The segment at 1-92 (MASSSSRTRS…QSYPSEGLIG (92 aa)) is disordered. Over residues 8-19 (TRSRSPFSHRRP) the composition is skewed to basic residues. Over residues 23 to 49 (YSSASSTSSSLINNRLLPRSSSTPTST) the composition is skewed to low complexity. Polar residues predominate over residues 50 to 70 (VYNSGGVTGSRSMSITRTISD). The Kinesin motor domain maps to 104 to 421 (SISVTVRFRP…LKFASRAKRI (318 aa)). 184-191 (GVTSSGKT) serves as a coordination point for ATP. Residues 422-509 (EINASRNKII…QKLTKLILVS (88 aa)) are a coiled coil. The tract at residues 549–578 (PSSTLSLASDARRSSSKFKDENSPVGSRAE) is disordered. Residues 558–570 (DARRSSSKFKDEN) show a composition bias toward basic and acidic residues. Coiled-coil stretches lie at residues 621–658 (PENSKTQIQNLENDIQEKQRQMKSLEQRITESGEASIA), 704–826 (NNEL…AQKR), 873–904 (LEAALAEKEYIEEEFRKKAEEAKRREEALEND), and 935–999 (KEDE…SQAA). A compositionally biased stretch (low complexity) spans 824–838 (QKRNNNSMNSAANRN). Residues 824–847 (QKRNNNSMNSAANRNGTRPGRKAR) are disordered. The tract at residues 922–946 (ALSIQKSDEAEPAKEDEVTELDNKN) is disordered. The segment covering 927–946 (KSDEAEPAKEDEVTELDNKN) has biased composition (basic and acidic residues). An RING-type zinc finger spans residues 1011–1046 (CKVCFESPTATILLPCRHFCLCKSCSLACSECPICR).

This sequence belongs to the TRAFAC class myosin-kinesin ATPase superfamily. Kinesin family. KIN-7 subfamily.

It is found in the plastid. Its subcellular location is the chloroplast. The chain is Kinesin-like protein KIN-7M, chloroplastic from Arabidopsis thaliana (Mouse-ear cress).